A 730-amino-acid chain; its full sequence is Catalase-peroxidase (730 aa).

The segment at 1-21 (MTENKCPVTGKMSKATAGSGT) is disordered. The segment at residues 95–218 (WHSAGTYRVG…LAAVQMGLIY (124 aa)) is a cross-link (tryptophyl-tyrosyl-methioninium (Trp-Tyr) (with M-244)). His-96 serves as the catalytic Proton acceptor. The tryptophyl-tyrosyl-methioninium (Tyr-Met) (with W-95) cross-link spans 218–244 (YVNPEGPNGNPDPLGSAHDVRETFARM). Residue His-259 participates in heme b binding.

The protein belongs to the peroxidase family. Peroxidase/catalase subfamily. In terms of assembly, homodimer or homotetramer. The cofactor is heme b. Post-translationally, formation of the three residue Trp-Tyr-Met cross-link is important for the catalase, but not the peroxidase activity of the enzyme.

It carries out the reaction H2O2 + AH2 = A + 2 H2O. The catalysed reaction is 2 H2O2 = O2 + 2 H2O. Bifunctional enzyme with both catalase and broad-spectrum peroxidase activity. The polypeptide is Catalase-peroxidase (Clostridium botulinum (strain Alaska E43 / Type E3)).